The primary structure comprises 224 residues: Urease accessory protein UreF (224 aa).

The protein belongs to the UreF family. UreD, UreF and UreG form a complex that acts as a GTP-hydrolysis-dependent molecular chaperone, activating the urease apoprotein by helping to assemble the nickel containing metallocenter of UreC. The UreE protein probably delivers the nickel.

The protein localises to the cytoplasm. In terms of biological role, required for maturation of urease via the functional incorporation of the urease nickel metallocenter. This Ectopseudomonas mendocina (strain ymp) (Pseudomonas mendocina) protein is Urease accessory protein UreF.